Here is a 345-residue protein sequence, read N- to C-terminus: Phosphoribosylformylglycinamidine cyclo-ligase (345 aa).

The protein belongs to the AIR synthase family.

It is found in the cytoplasm. The enzyme catalyses 2-formamido-N(1)-(5-O-phospho-beta-D-ribosyl)acetamidine + ATP = 5-amino-1-(5-phospho-beta-D-ribosyl)imidazole + ADP + phosphate + H(+). It participates in purine metabolism; IMP biosynthesis via de novo pathway; 5-amino-1-(5-phospho-D-ribosyl)imidazole from N(2)-formyl-N(1)-(5-phospho-D-ribosyl)glycinamide: step 2/2. The chain is Phosphoribosylformylglycinamidine cyclo-ligase from Limosilactobacillus reuteri (strain DSM 20016) (Lactobacillus reuteri).